Reading from the N-terminus, the 367-residue chain is Anhydro-N-acetylmuramic acid kinase (367 aa).

13-20 is an ATP binding site; the sequence is GTSMDGAD.

Belongs to the anhydro-N-acetylmuramic acid kinase family.

The catalysed reaction is 1,6-anhydro-N-acetyl-beta-muramate + ATP + H2O = N-acetyl-D-muramate 6-phosphate + ADP + H(+). It participates in amino-sugar metabolism; 1,6-anhydro-N-acetylmuramate degradation. Its pathway is cell wall biogenesis; peptidoglycan recycling. Catalyzes the specific phosphorylation of 1,6-anhydro-N-acetylmuramic acid (anhMurNAc) with the simultaneous cleavage of the 1,6-anhydro ring, generating MurNAc-6-P. Is required for the utilization of anhMurNAc either imported from the medium or derived from its own cell wall murein, and thus plays a role in cell wall recycling. This Neisseria meningitidis serogroup B (strain ATCC BAA-335 / MC58) protein is Anhydro-N-acetylmuramic acid kinase.